A 458-amino-acid chain; its full sequence is Cell division protein FtsZ (458 aa).

GTP contacts are provided by residues 22-26, 109-111, Glu-140, Arg-144, and Asp-188; these read GAGGN and GTG. The disordered stretch occupies residues 319–458; sequence KAEEEASKQP…IPFFKHRRQD (140 aa). The segment covering 368–379 has biased composition (polar residues); that stretch reads NTISHEAPTQSI. Residues 401-418 are compositionally biased toward basic and acidic residues; that stretch reads KQDRKENNRPQPVENKEK. Residues 425 to 439 are compositionally biased toward low complexity; sequence SFSSDDSTSISQIET.

It belongs to the FtsZ family. As to quaternary structure, homodimer. Polymerizes to form a dynamic ring structure in a strictly GTP-dependent manner. Interacts directly with several other division proteins.

The protein resides in the cytoplasm. In terms of biological role, essential cell division protein that forms a contractile ring structure (Z ring) at the future cell division site. The regulation of the ring assembly controls the timing and the location of cell division. One of the functions of the FtsZ ring is to recruit other cell division proteins to the septum to produce a new cell wall between the dividing cells. Binds GTP and shows GTPase activity. The chain is Cell division protein FtsZ from Lactobacillus johnsonii (strain CNCM I-12250 / La1 / NCC 533).